A 253-amino-acid chain; its full sequence is Zinc finger protein JAGGED (253 aa).

A disordered region spans residues 1–46 (MRHEENYLDLNNLPDDFSKDGNKQALEEGSSSGQRKKKGSKEGKDE). Basic and acidic residues predominate over residues 16–26 (DFSKDGNKQAL). Residues 51 to 73 (YECRFCSLKFCKSQALGGHMNRH) form a C2H2-type zinc finger.

As to quaternary structure, interacts with GATA18/HAN. In terms of tissue distribution, expressed in the emerging leaf, sepal, petal, stamen and carpel primordia. Not expressed in the apical shoot meristem (SAM).

It is found in the nucleus. Its function is as follows. Controls the morphogenesis of lateral organs. Functions in lateral organ shape and is sufficient to induce proliferation and growth of lateral organ tissue. Is necessary and sufficient for bract formation, but its expression is excluded from the cryptic bract, which could be a cause of bractless flowers in Arabidopsis. Participates with FIL and YAB3 in regulating valve margin development. Functions with JGL to define stamen and carpel shape. Functions with AS1 and AS2 in the sepal and petal primordia to repress boundary-specifying genes for normal development of the organs. The chain is Zinc finger protein JAGGED (JAG) from Arabidopsis thaliana (Mouse-ear cress).